A 597-amino-acid chain; its full sequence is Gamma-terpinene synthase, chloroplastic (597 aa).

A chloroplast-targeting transit peptide spans 1–47 (MATLSMQVSILSKQVKNLNSFGMRASKLPMVARRVDVSTTRLRPICS). Mn(2+) contacts are provided by D350 and D354. The DDXXD motif motif lies at 350 to 354 (DDVYD). Homodimerization regions lie at residues 356-362 (YGTLDEL) and 428-464 (EAKWYYAGYTPTLAEYLENAKVSISSPTIISQVYFTL). Residues D494 and E502 each contribute to the Mn(2+) site.

It belongs to the terpene synthase family. In terms of assembly, homodimer. Mn(2+) is required as a cofactor. The cofactor is Mg(2+).

Its subcellular location is the plastid. The protein resides in the chloroplast. The catalysed reaction is (2E)-geranyl diphosphate = gamma-terpinene + diphosphate. It participates in secondary metabolite biosynthesis; terpenoid biosynthesis. Involved in the biosynthesis of phenolic monoterpenes natural products thymol and carvacrol which have a broad range of biological activities acting as antimicrobial compounds, insecticides, antioxidants and pharmaceutical agents. Monoterpene synthase which catalyzes the conversion of geranyl diphosphate (GPP) to gamma-terpinene. In Thymus caespititius (Cretan thyme), this protein is Gamma-terpinene synthase, chloroplastic.